The chain runs to 382 residues: Solvent efflux pump periplasmic linker SrpA (382 aa).

Positions 1–23 (MRQIRSPRALRVIPLTALMLISG) are cleaved as a signal peptide. C24 is lipidated: N-palmitoyl cysteine. The S-diacylglycerol cysteine moiety is linked to residue C24. Residues 98–127 (RTYEAQLRRAEANRTSAQNLARRYETLLKT) are a coiled coil.

The protein belongs to the membrane fusion protein (MFP) (TC 8.A.1) family.

The protein localises to the cell inner membrane. Functionally, the periplasmic linker protein component of an organic solvent efflux pump. Involved in export of a number of low log POW compounds including hexane (log POW 3.5), toluene (log POW 2.5) and dimethylphthalate (log POW 2.3). The solvent resistance phenotype has been postulated to depend on the operon expression level. The polypeptide is Solvent efflux pump periplasmic linker SrpA (srpA) (Pseudomonas putida (Arthrobacter siderocapsulatus)).